The primary structure comprises 93 residues: Beta-defensin 128 (93 aa).

Residues 1-18 (MKLFLVLIILLFEVLTDG) form the signal peptide. 3 disulfide bridges follow: Cys24–Cys52, Cys32–Cys46, and Cys36–Cys53.

The protein belongs to the beta-defensin family.

The protein resides in the secreted. Functionally, has antibacterial activity. This chain is Beta-defensin 128 (DEFB128), found in Pongo pygmaeus (Bornean orangutan).